A 162-amino-acid polypeptide reads, in one-letter code: Cytochrome c-type biogenesis protein CcmE (162 aa).

At 1 to 8 (MNPRRKKR) the chain is on the cytoplasmic side. The helical; Signal-anchor for type II membrane protein transmembrane segment at 9 to 29 (LALVVGLIGGVAAVASLLLYA) threads the bilayer. At 30–162 (LNTNLNLFYT…YTETQKGGSR (133 aa)) the chain is on the periplasmic side. Heme is bound by residues histidine 131 and tyrosine 135.

This sequence belongs to the CcmE/CycJ family.

Its subcellular location is the cell inner membrane. Functionally, heme chaperone required for the biogenesis of c-type cytochromes. Transiently binds heme delivered by CcmC and transfers the heme to apo-cytochromes in a process facilitated by CcmF and CcmH. The chain is Cytochrome c-type biogenesis protein CcmE from Shewanella amazonensis (strain ATCC BAA-1098 / SB2B).